Reading from the N-terminus, the 64-residue chain is MAKTKGIRISITLECTSCKNNNNKRSTGISRYMTQKNRRNTPNRLELKKFCSHCNQSTIHKEIK.

Belongs to the bacterial ribosomal protein bL33 family.

It localises to the plastid. It is found in the chloroplast. In Mesostigma viride (Green alga), this protein is Large ribosomal subunit protein bL33c (rpl33).